The sequence spans 838 residues: Valine--tRNA ligase (838 aa).

The 'HIGH' region motif lies at 46–56 (PNLTGTLHIGH). A 'KMSKS' region motif is present at residues 514-518 (KMSKS). Position 517 (Lys517) interacts with ATP. Positions 768–838 (VDNAANNLAH…HLIAKLTKAE (71 aa)) form a coiled coil.

It belongs to the class-I aminoacyl-tRNA synthetase family. ValS type 1 subfamily. In terms of assembly, monomer.

The protein localises to the cytoplasm. It carries out the reaction tRNA(Val) + L-valine + ATP = L-valyl-tRNA(Val) + AMP + diphosphate. Functionally, catalyzes the attachment of valine to tRNA(Val). As ValRS can inadvertently accommodate and process structurally similar amino acids such as threonine, to avoid such errors, it has a 'posttransfer' editing activity that hydrolyzes mischarged Thr-tRNA(Val) in a tRNA-dependent manner. This chain is Valine--tRNA ligase, found in Mycoplasma pneumoniae (strain ATCC 29342 / M129 / Subtype 1) (Mycoplasmoides pneumoniae).